A 1834-amino-acid polypeptide reads, in one-letter code: Sodium channel protein type 4 subunit alpha (1834 aa).

Residues M1–S131 are Cytoplasmic-facing. The stretch at M113–N448 is one I repeat. A helical transmembrane segment spans residues L132 to M150. The Extracellular portion of the chain corresponds to S151–P157. A helical transmembrane segment spans residues I158 to A178. The Cytoplasmic portion of the chain corresponds to R179 to P192. Residues W193–V210 form a helical membrane-spanning segment. Topologically, residues D211–S216 are extracellular. N214 is a glycosylation site (N-linked (GlcNAc...) asparagine). The helical transmembrane segment at A217 to I233 threads the bilayer. Topologically, residues P234–D252 are cytoplasmic. Residues V253 to F272 traverse the membrane as a helical segment. Topologically, residues M273–T385 are extracellular. C280 and C354 are oxidised to a cystine. N-linked (GlcNAc...) asparagine glycosylation is found at N288, N291, N297, N303, N309, N327, and N356. Cysteines 363 and 369 form a disulfide. Positions F386–L410 form an intramembrane region, pore-forming. Residues R411–Y417 are Extracellular-facing. The chain crosses the membrane as a helical span at residues M418–A438. Over V439–P572 the chain is Cytoplasmic. The tract at residues E486 to S525 is disordered. Residues C554–G826 form an II repeat. Residues F573–M591 traverse the membrane as a helical segment. At E592 to K602 the chain is on the extracellular side. The chain crosses the membrane as a helical span at residues V603 to K622. The Cytoplasmic portion of the chain corresponds to L623–W636. A helical membrane pass occupies residues N637–V656. Residues K657–G658 are Extracellular-facing. A helical transmembrane segment spans residues L659 to S676. Residues W677–G692 lie on the Cytoplasmic side of the membrane. Residues G693–V711 traverse the membrane as a helical segment. The Extracellular segment spans residues G712–D740. C725 and C731 are oxidised to a cystine. The segment at residues F741–W761 is an intramembrane region (pore-forming). The Extracellular segment spans residues G762–F772. The chain crosses the membrane as a helical span at residues L773 to F791. The Cytoplasmic segment spans residues L792–W1029. Disordered regions lie at residues G853–K886 and S929–E989. Residues E860–P869 are compositionally biased toward acidic residues. The span at E870–K886 shows a compositional bias: basic and acidic residues. Acidic residues-rich tracts occupy residues S929 to P945 and E972 to E989. One copy of the III repeat lies at R1010 to L1323. A helical membrane pass occupies residues F1030 to F1047. Residues E1048–T1060 lie on the Extracellular side of the membrane. Residues I1061–L1079 traverse the membrane as a helical segment. Topologically, residues K1080–A1093 are cytoplasmic. A helical membrane pass occupies residues W1094–N1112. Residues W1113–G1120 are Extracellular-facing. A helical transmembrane segment spans residues P1121–R1139. Over F1140–S1156 the chain is Cytoplasmic. Residues I1157–V1176 traverse the membrane as a helical segment. The Extracellular portion of the chain corresponds to N1177 to V1227. N-linked (GlcNAc...) asparagine glycosylation is found at N1188 and N1202. Residues G1228 to S1249 constitute an intramembrane region (pore-forming). Residues A1250–I1266 lie on the Extracellular side of the membrane. A helical membrane pass occupies residues Y1267–I1288. Residues R1289–V1351 lie on the Cytoplasmic side of the membrane. The segment at I1307–M1309 is important for rapid channel inactivation. The IV repeat unit spans residues I1332–Q1630. A helical transmembrane segment spans residues F1352–V1369. The Extracellular portion of the chain corresponds to E1370–D1380. A helical membrane pass occupies residues I1381–L1399. The Cytoplasmic portion of the chain corresponds to K1400–V1411. Residues G1412–A1429 form a helical membrane-spanning segment. Residues L1430–T1442 lie on the Extracellular side of the membrane. The helical transmembrane segment at L1443 to I1459 threads the bilayer. Over R1460–A1478 the chain is Cytoplasmic. The chain crosses the membrane as a helical span at residues L1479 to F1496. At G1497–T1518 the chain is on the extracellular side. The segment at residues F1519–P1541 is an intramembrane region (pore-forming). Topologically, residues I1542–G1571 are extracellular. A disulfide bridge links C1550 with C1565. Residues I1572 to I1594 form a helical membrane-spanning segment. At L1595–V1834 the chain is on the cytoplasmic side. Residues E1724–H1753 enclose the IQ domain. The disordered stretch occupies residues M1776–V1834.

Belongs to the sodium channel (TC 1.A.1.10) family. Nav1.4/SCN4A subfamily. The Nav1.4 voltage-gated sodium channel consists of an ion-conducting alpha subunit SCN4A which is functional on its own and a regulatory beta subunit SCN1B. SCN1B strongly enhances the presence of SCN4A at the cell surface. SCN1B is also required for rapid channel inactivation and recovery after inactivation. It prevents the decrease of channel activity in response to repetitive, high-frequency depolarizations. Interacts with the syntrophins SNTA1, SNTB1 and SNTB2 (via PDZ domain); probably links SCN4A to the actin cytoskeleton and the extracellular matrix via the dystrophin-associated protein complex and regulates its localization in muscle cells. Interacts with TMEM233; probable regulator of the channel.

The protein resides in the cell membrane. It carries out the reaction Na(+)(in) = Na(+)(out). Pore-forming subunit of Nav1.4, a voltage-gated sodium (Nav) channel that directly mediates the depolarizing phase of action potentials in excitable membranes. Navs, also called VGSCs (voltage-gated sodium channels) or VDSCs (voltage-dependent sodium channels), operate by switching between closed and open conformations depending on the voltage difference across the membrane. In the open conformation they allow Na(+) ions to selectively pass through the pore, along their electrochemical gradient. The influx of Na+ ions provokes membrane depolarization, initiating the propagation of electrical signals throughout cells and tissues. Highly expressed in skeletal muscles, Nav1.4 generates the action potential crucial for muscle contraction. The protein is Sodium channel protein type 4 subunit alpha of Equus caballus (Horse).